The sequence spans 361 residues: Probable purine permease 5 (361 aa).

The next 9 membrane-spanning stretches (helical) occupy residues 37–57 (WILL…SSLL), 70–90 (WIIS…LLPT), 105–125 (LVLS…MYAY), 134–154 (TSSL…YLIV), 158–178 (LNAS…IIAL), 193–213 (YFAG…IFAL), 235–255 (VMVS…SNDF), 285–305 (LGVL…AGVL), and 315–335 (VAAV…SLVL). The EamA domain occupies 75–178 (VAVAGWPITC…ITGAMAIIAL (104 aa)).

Belongs to the purine permeases (TC 2.A.7.14) family.

It localises to the membrane. This Arabidopsis thaliana (Mouse-ear cress) protein is Probable purine permease 5 (PUP5).